The primary structure comprises 1238 residues: Lysine-specific demethylase JMJ703 (1238 aa).

Residues 56–79 are disordered; it reads EECQPSAAVSRSDTPCSTSGTQTC. Polar residues predominate over residues 62 to 79; that stretch reads AAVSRSDTPCSTSGTQTC. The JmjN domain occupies 154–195; that stretch reads APVFYPTEEEFEDTLKYIESIRPMAEPYGICRIVPPSSWKPP. The disordered stretch occupies residues 215-266; it reads KVDKLQNRKSSKKGRRGGMMKRRKLAESEENSATAHTQTGMQQSPERFGFEP. Residues 221 to 238 show a composition bias toward basic residues; the sequence is NRKSSKKGRRGGMMKRRK. Positions 245 to 259 are enriched in polar residues; the sequence is NSATAHTQTGMQQSP. In terms of domain architecture, JmjC spans 348-514; the sequence is KYAQSGWNLN…IGHNAVELYR (167 aa). Fe cation-binding residues include His-394, Glu-396, and His-482. Disordered regions lie at residues 699–725, 777–798, 834–863, and 910–978; these read GPRR…QKDE, YNGG…SSPS, TGDS…SSLE, and ASSQ…LQRT. Residues 706 to 719 are compositionally biased toward low complexity; it reads SQASAVSLVSSSTS. Residues 910-923 show a composition bias toward polar residues; the sequence is ASSQQFVRTGPWTQ. Over residues 924–936 the composition is skewed to low complexity; sequence SASHEASSPSTSA. A compositionally biased stretch (polar residues) spans 964–978; that stretch reads SFSNQQPNDGRLQRT. One can recognise an FYR N-terminal domain in the interval 1019-1077; that stretch reads VVHRFKCSVEPLEIGVVLSGRLWSSSQAIFPKGFRSRVKYFSIVDPIQMAYYISEILDA. Residues 1079–1169 enclose the FYR C-terminal domain; the sequence is MQGPLFMVKL…HICTEYWRSR (91 aa).

Fe(2+) serves as cofactor. Expressed in roots, leaf sheaths, stems and panicles.

Its subcellular location is the nucleus. It carries out the reaction N(6),N(6),N(6)-trimethyl-L-lysyl(4)-[histone H3] + 3 2-oxoglutarate + 3 O2 = L-lysyl(4)-[histone H3] + 3 formaldehyde + 3 succinate + 3 CO2. Its function is as follows. Histone demethylase that demethylates 'Lys-4' (H3K4me) of histone H3 with a specific activity for H3K4me3, H3K4me2 and H3K4me1. No activity on H3K9me3/2/1, H3K27me3/2/1 and H3K36me3/2/1. Involved in the control of stem elongation by regulating methylation states of H3K4me3 on cytokinin oxidase (CKX) gene family, which may cause increased expression of CKX genes and reduced cytokinin levels. Prevents ectopic retrotransposition by regulating the levels of H3K4me3 in two non-LTR retrotransposons KARMA and LINE-1 (L1) and reinforcing their repressed states. The protein is Lysine-specific demethylase JMJ703 (JMJ703) of Oryza sativa subsp. japonica (Rice).